We begin with the raw amino-acid sequence, 435 residues long: 3-phosphoshikimate 1-carboxyvinyltransferase (435 aa).

Positions 21, 22, and 26 each coordinate 3-phosphoshikimate. Residue Lys-21 participates in phosphoenolpyruvate binding. The phosphoenolpyruvate site is built by Gly-98 and Arg-126. The 3-phosphoshikimate site is built by Ser-169, Ser-170, Gln-171, Ser-197, Asp-312, and Lys-339. Gln-171 provides a ligand contact to phosphoenolpyruvate. Asp-312 acts as the Proton acceptor in catalysis. Phosphoenolpyruvate-binding residues include Arg-343, Arg-386, and Lys-412.

Belongs to the EPSP synthase family. In terms of assembly, monomer.

Its subcellular location is the cytoplasm. The enzyme catalyses 3-phosphoshikimate + phosphoenolpyruvate = 5-O-(1-carboxyvinyl)-3-phosphoshikimate + phosphate. Its pathway is metabolic intermediate biosynthesis; chorismate biosynthesis; chorismate from D-erythrose 4-phosphate and phosphoenolpyruvate: step 6/7. Functionally, catalyzes the transfer of the enolpyruvyl moiety of phosphoenolpyruvate (PEP) to the 5-hydroxyl of shikimate-3-phosphate (S3P) to produce enolpyruvyl shikimate-3-phosphate and inorganic phosphate. In Clostridium beijerinckii (strain ATCC 51743 / NCIMB 8052) (Clostridium acetobutylicum), this protein is 3-phosphoshikimate 1-carboxyvinyltransferase.